Here is a 1112-residue protein sequence, read N- to C-terminus: Carbamoyl phosphate synthase large chain (1112 aa).

Positions 1–407 are carboxyphosphate synthetic domain; sequence MPRRTDLRHV…ALGKVMRSLE (407 aa). Arginine 134, arginine 174, glycine 180, glycine 181, glutamate 213, isoleucine 215, glutamate 220, glycine 246, valine 247, histidine 248, glutamine 290, and glutamate 304 together coordinate ATP. The ATP-grasp 1 domain maps to 138–333; it reads KDIVTKVGGE…IAKIAAKLAI (196 aa). Residues glutamine 290, glutamate 304, and asparagine 306 each contribute to the Mg(2+) site. Residues glutamine 290, glutamate 304, and asparagine 306 each coordinate Mn(2+). Residues 408–559 are oligomerization domain; it reads TGRAGFWTAP…ELDPAAESEV (152 aa). The tract at residues 560–965 is carbamoyl phosphate synthetic domain; the sequence is APQAERPKVL…AFAKSQTAAY (406 aa). The 192-residue stretch at 693–884 folds into the ATP-grasp 2 domain; the sequence is GEVLRTAGLP…LAKACARIML (192 aa). The ATP site is built by arginine 729, arginine 768, leucine 770, glutamate 775, glycine 800, isoleucine 801, histidine 802, serine 803, glutamine 843, and glutamate 855. Residues glutamine 843, glutamate 855, and asparagine 857 each contribute to the Mg(2+) site. Mn(2+) contacts are provided by glutamine 843, glutamate 855, and asparagine 857. One can recognise an MGS-like domain in the interval 966–1112; sequence GSLPSEGTVF…LQELHSELGN (147 aa). The segment at 966 to 1112 is allosteric domain; sequence GSLPSEGTVF…LQELHSELGN (147 aa).

Belongs to the CarB family. As to quaternary structure, composed of two chains; the small (or glutamine) chain promotes the hydrolysis of glutamine to ammonia, which is used by the large (or ammonia) chain to synthesize carbamoyl phosphate. Tetramer of heterodimers (alpha,beta)4. Mg(2+) is required as a cofactor. It depends on Mn(2+) as a cofactor.

The catalysed reaction is hydrogencarbonate + L-glutamine + 2 ATP + H2O = carbamoyl phosphate + L-glutamate + 2 ADP + phosphate + 2 H(+). It carries out the reaction hydrogencarbonate + NH4(+) + 2 ATP = carbamoyl phosphate + 2 ADP + phosphate + 2 H(+). The protein operates within amino-acid biosynthesis; L-arginine biosynthesis; carbamoyl phosphate from bicarbonate: step 1/1. It functions in the pathway pyrimidine metabolism; UMP biosynthesis via de novo pathway; (S)-dihydroorotate from bicarbonate: step 1/3. Its function is as follows. Large subunit of the glutamine-dependent carbamoyl phosphate synthetase (CPSase). CPSase catalyzes the formation of carbamoyl phosphate from the ammonia moiety of glutamine, carbonate, and phosphate donated by ATP, constituting the first step of 2 biosynthetic pathways, one leading to arginine and/or urea and the other to pyrimidine nucleotides. The large subunit (synthetase) binds the substrates ammonia (free or transferred from glutamine from the small subunit), hydrogencarbonate and ATP and carries out an ATP-coupled ligase reaction, activating hydrogencarbonate by forming carboxy phosphate which reacts with ammonia to form carbamoyl phosphate. The sequence is that of Carbamoyl phosphate synthase large chain from Mycobacterium sp. (strain JLS).